The following is a 33-amino-acid chain: Ferredoxin (33 aa).

The 2Fe-2S ferredoxin-type domain occupies 3 to 33 (KYKVRLLSEAEGIDVTIDSADDVYILDAAEE).

This sequence belongs to the 2Fe2S plant-type ferredoxin family. [2Fe-2S] cluster serves as cofactor.

The protein localises to the plastid. It localises to the chloroplast. In terms of biological role, ferredoxins are iron-sulfur proteins that transfer electrons in a wide variety of metabolic reactions. This is Ferredoxin from Porphyridium aerugineum (Red microalga).